The chain runs to 634 residues: Threonine--tRNA ligase (634 aa).

In terms of domain architecture, TGS spans 1–61 (MINITLPDGS…DHDASLRIIT (61 aa)). The segment at 243 to 534 (DHRRIGKAQD…LIEHHAGAFP (292 aa)) is catalytic. Zn(2+) is bound by residues Cys-334, His-385, and His-511.

It belongs to the class-II aminoacyl-tRNA synthetase family. In terms of assembly, homodimer. It depends on Zn(2+) as a cofactor.

The protein localises to the cytoplasm. It catalyses the reaction tRNA(Thr) + L-threonine + ATP = L-threonyl-tRNA(Thr) + AMP + diphosphate + H(+). Its function is as follows. Catalyzes the attachment of threonine to tRNA(Thr) in a two-step reaction: L-threonine is first activated by ATP to form Thr-AMP and then transferred to the acceptor end of tRNA(Thr). Also edits incorrectly charged L-seryl-tRNA(Thr). This Xanthomonas euvesicatoria pv. vesicatoria (strain 85-10) (Xanthomonas campestris pv. vesicatoria) protein is Threonine--tRNA ligase.